Reading from the N-terminus, the 188-residue chain is Small ribosomal subunit protein bS18c (188 aa).

Low complexity predominate over residues 1 to 19 (MNNQSFNNFSQVNSNSSFF). The disordered stretch occupies residues 1 to 79 (MNNQSFNNFS…TSNKRKVLSV (79 aa)). Positions 25–71 (NLQNTNLEMTNGTNPPSSFSKQTPQKRQSFGTNTNFSKGNSSRGSTS) are enriched in polar residues.

This sequence belongs to the bacterial ribosomal protein bS18 family. As to quaternary structure, part of the 30S ribosomal subunit.

It localises to the plastid. The protein localises to the chloroplast. The chain is Small ribosomal subunit protein bS18c from Tetradesmus obliquus (Green alga).